A 205-amino-acid chain; its full sequence is Small ribosomal subunit protein uS4 (205 aa).

Residues 94–154 enclose the S4 RNA-binding domain; sequence SRLDNSVYRA…TRKDGKIRKN (61 aa).

The protein belongs to the universal ribosomal protein uS4 family. In terms of assembly, part of the 30S ribosomal subunit. Contacts protein S5. The interaction surface between S4 and S5 is involved in control of translational fidelity.

Functionally, one of the primary rRNA binding proteins, it binds directly to 16S rRNA where it nucleates assembly of the body of the 30S subunit. With S5 and S12 plays an important role in translational accuracy. The protein is Small ribosomal subunit protein uS4 of Mesomycoplasma hyopneumoniae (strain 232) (Mycoplasma hyopneumoniae).